The primary structure comprises 210 residues: 7-methyl-GTP pyrophosphatase (210 aa).

Residue aspartate 79 is the Proton acceptor of the active site.

This sequence belongs to the Maf family. YceF subfamily. A divalent metal cation serves as cofactor.

It localises to the cytoplasm. It catalyses the reaction N(7)-methyl-GTP + H2O = N(7)-methyl-GMP + diphosphate + H(+). Its function is as follows. Nucleoside triphosphate pyrophosphatase that hydrolyzes 7-methyl-GTP (m(7)GTP). May have a dual role in cell division arrest and in preventing the incorporation of modified nucleotides into cellular nucleic acids. The chain is 7-methyl-GTP pyrophosphatase from Burkholderia lata (strain ATCC 17760 / DSM 23089 / LMG 22485 / NCIMB 9086 / R18194 / 383).